Consider the following 180-residue polypeptide: UPF0227 protein YcfP (180 aa).

This sequence belongs to the UPF0227 family.

The protein is UPF0227 protein YcfP of Salmonella paratyphi A (strain ATCC 9150 / SARB42).